The sequence spans 1016 residues: MGKQRRTMISFTLFLTLTMMSSLINGDTDSIQLNDDVLGLIVFKSDLNDPFSHLESWTEDDNTPCSWSYVKCNPKTSRVIELSLDGLALTGKINRGIQKLQRLKVLSLSNNNFTGNINALSNNNHLQKLDLSHNNLSGQIPSSLGSITSLQHLDLTGNSFSGTLSDDLFNNCSSLRYLSLSHNHLEGQIPSTLFRCSVLNSLNLSRNRFSGNPSFVSGIWRLERLRALDLSSNSLSGSIPLGILSLHNLKELQLQRNQFSGALPSDIGLCPHLNRVDLSSNHFSGELPRTLQKLKSLNHFDVSNNLLSGDFPPWIGDMTGLVHLDFSSNELTGKLPSSISNLRSLKDLNLSENKLSGEVPESLESCKELMIVQLKGNDFSGNIPDGFFDLGLQEMDFSGNGLTGSIPRGSSRLFESLIRLDLSHNSLTGSIPGEVGLFIHMRYLNLSWNHFNTRVPPEIEFLQNLTVLDLRNSALIGSVPADICESQSLQILQLDGNSLTGSIPEGIGNCSSLKLLSLSHNNLTGPIPKSLSNLQELKILKLEANKLSGEIPKELGDLQNLLLVNVSFNRLIGRLPLGDVFQSLDQSAIQGNLGICSPLLRGPCTLNVPKPLVINPNSYGNGNNMPGNRASGGSGTFHRRMFLSVSVIVAISAAILIFSGVIIITLLNASVRRRLAFVDNALESIFSGSSKSGRSLMMGKLVLLNSRTSRSSSSSQEFERNPESLLNKASRIGEGVFGTVYKAPLGEQGRNLAVKKLVPSPILQNLEDFDREVRILAKAKHPNLVSIKGYFWTPDLHLLVSEYIPNGNLQSKLHEREPSTPPLSWDVRYKIILGTAKGLAYLHHTFRPTTIHFNLKPTNILLDEKNNPKISDFGLSRLLTTQDGNTMNNNRFQNALGYVAPELECQNLRVNEKCDVYGFGVLILELVTGRRPVEYGEDSFVILSDHVRVMLEQGNVLECIDPVMEEQYSEDEVLPVLKLALVCTSQIPSNRPTMAEIVQILQVINSPVPHRIMDSF.

Positions 1 to 26 are cleaved as a signal peptide; that stretch reads MGKQRRTMISFTLFLTLTMMSSLING. Over 27–646 the chain is Extracellular; the sequence is DTDSIQLNDD…FHRRMFLSVS (620 aa). LRR repeat units lie at residues 102-124, 125-147, 149-171, 174-196, 198-219, 224-245, 248-270, 272-295, 296-318, 320-342, 344-366, 368-390, 391-413, 416-438, 440-462, 464-486, 488-510, 512-535, 536-559, and 560-582; these read RLKV…SNNN, HLQK…LGSI, SLQH…LFNN, SLRY…LFRC, VLNS…VSGI, RLRA…GILS, NLKE…IGLC, HLNR…QKLK, SLNH…IGDM, GLVH…ISNL, SLKD…LESC, ELMI…FFDL, GLQE…SSRL, SLIR…VGLF, HMRY…IEFL, NLTV…ICES, SLQI…IGNC, SLKL…SNLQ, ELKI…GDLQ, and NLLL…DVFQ. N-linked (GlcNAc...) asparagine glycosylation is found at asparagine 112, asparagine 135, and asparagine 171. Asparagine 203 carries N-linked (GlcNAc...) asparagine glycosylation. Asparagine 349 carries an N-linked (GlcNAc...) asparagine glycan. N-linked (GlcNAc...) asparagine glycans are attached at residues asparagine 445, asparagine 464, asparagine 509, and asparagine 522. N-linked (GlcNAc...) asparagine glycosylation occurs at asparagine 565. Residues 647–667 traverse the membrane as a helical segment; the sequence is VIVAISAAILIFSGVIIITLL. Residues 668-1016 lie on the Cytoplasmic side of the membrane; it reads NASVRRRLAF…PVPHRIMDSF (349 aa). A Protein kinase domain is found at 726 to 1013; that stretch reads LNKASRIGEG…INSPVPHRIM (288 aa). Residues 732–740 and lysine 755 each bind ATP; that span reads IGEGVFGTV. 2 positions are modified to phosphotyrosine: tyrosine 841 and tyrosine 898.

Belongs to the protein kinase superfamily. Ser/Thr protein kinase family.

The protein localises to the membrane. This is Probably inactive leucine-rich repeat receptor-like protein kinase At3g28040 from Arabidopsis thaliana (Mouse-ear cress).